Here is a 117-residue protein sequence, read N- to C-terminus: Photosystem II reaction center Psb28 protein (117 aa).

This sequence belongs to the Psb28 family. As to quaternary structure, part of the photosystem II complex.

Its subcellular location is the cellular thylakoid membrane. The chain is Photosystem II reaction center Psb28 protein from Prochlorococcus marinus (strain MIT 9312).